A 148-amino-acid polypeptide reads, in one-letter code: Large ribosomal subunit protein bL9 (148 aa).

Belongs to the bacterial ribosomal protein bL9 family.

In terms of biological role, binds to the 23S rRNA. The sequence is that of Large ribosomal subunit protein bL9 from Bacillus cereus (strain ATCC 10987 / NRS 248).